The sequence spans 412 residues: DnaJ homolog subfamily A member 2 (412 aa).

One can recognise a J domain in the interval 8-70; the sequence is KLYDILGVPP…EKRELYDRYG (63 aa). The residue at position 39 (K39) is an N6-acetyllysine. A phosphoserine mark is found at S78 and S123. A CR-type zinc finger spans residues 130 to 214; it reads GKTTKLQLSK…CEGKKVIKEV (85 aa). A Glycyl lysine isopeptide (Lys-Gly) (interchain with G-Cter in SUMO2) cross-link involves residue K134. Residues C143 and C146 each contribute to the Zn(2+) site. Residues 143–150 form a CXXCXGXG motif repeat; sequence CSACSGQG. K152 carries the N6-acetyllysine modification. Zn(2+) is bound by residues C159, C162, C186, C189, C202, and C205. CXXCXGXG motif repeat units lie at residues 159 to 166, 186 to 193, and 202 to 209; these read CSACRGRG, CSDCNGEG, and CKKCEGKK. Residues 365 to 412 are disordered; the sequence is IGETEEVELQEFDSTRGSGGGQRREAYNDSSDEESSSHHGPGVQCAHQ. Phosphotyrosine is present on Y391. Phosphoserine is present on residues S394 and S395. Position 409 is a cysteine methyl ester (C409). A lipid anchor (S-farnesyl cysteine) is attached at C409. A propeptide spans 410 to 412 (removed in mature form); that stretch reads AHQ.

The protein localises to the membrane. Its function is as follows. Co-chaperone of Hsc70. Stimulates ATP hydrolysis and the folding of unfolded proteins mediated by HSPA1A/B (in vitro). The protein is DnaJ homolog subfamily A member 2 (Dnaja2) of Rattus norvegicus (Rat).